Consider the following 259-residue polypeptide: UPF0246 protein Pfl01_0961 (259 aa).

This sequence belongs to the UPF0246 family.

In Pseudomonas fluorescens (strain Pf0-1), this protein is UPF0246 protein Pfl01_0961.